The chain runs to 207 residues: Protein-L-isoaspartate O-methyltransferase (207 aa).

Residue Ser-56 is part of the active site.

This sequence belongs to the methyltransferase superfamily. L-isoaspartyl/D-aspartyl protein methyltransferase family.

The protein localises to the cytoplasm. It catalyses the reaction [protein]-L-isoaspartate + S-adenosyl-L-methionine = [protein]-L-isoaspartate alpha-methyl ester + S-adenosyl-L-homocysteine. Functionally, catalyzes the methyl esterification of L-isoaspartyl residues in peptides and proteins that result from spontaneous decomposition of normal L-aspartyl and L-asparaginyl residues. It plays a role in the repair and/or degradation of damaged proteins. The polypeptide is Protein-L-isoaspartate O-methyltransferase (Pyrobaculum islandicum (strain DSM 4184 / JCM 9189 / GEO3)).